The following is a 507-amino-acid chain: MELSPRAAELTNLFESRIRNFYANFQVDEIGRVVSVGDGIAQVYGLNEIQAGEMVLFANGVKGMALNLENENVGIVVFGGDTAIKEGDLVKRTGSIVDVPAGKAMLGRVVDAMGVPIDGRGALSDHEQRRVEVKAPGILERKSVHEPMQTGLKAVDSLVPIGRGQRELLIGDRQTGKTTIAIDTILNQKQINSRATSESETMYCVYVAIGQKRSTVGQLIQTLEEANALEYSILVAATASDPAPLQFLAPYSGCAMGEYFRDNGMHALIIYDDLSKQAVAYRQMSLLLRRPPGREAFPGDVFYLHSRLLERAAKRSDQTGAGSLTALPVIETQAGDVSAYIPTNVISITDGQICLETELFYRGIRPAINVGLSVSRVGSAAQLKAMKQVCGSSKLELAQYREVAAFAQFGSDLDAATQALLNRGARLTEVPKQPQYAPLPIEKQILVIYAAVNGFCDRMPLDRISQYEKAIPNSVKPELLQALKGGLTNERKMEPDAFLKERALRLI.

171–178 (GDRQTGKT) is an ATP binding site.

It belongs to the ATPase alpha/beta chains family. As to quaternary structure, F-type ATPases have 2 components, CF(1) - the catalytic core - and CF(0) - the membrane proton channel. CF(1) has five subunits: alpha(3), beta(3), gamma(1), delta(1), epsilon(1). CF(0) has three main subunits: a, b and c.

It is found in the mitochondrion. It localises to the mitochondrion inner membrane. Its function is as follows. Mitochondrial membrane ATP synthase (F(1)F(0) ATP synthase or Complex V) produces ATP from ADP in the presence of a proton gradient across the membrane which is generated by electron transport complexes of the respiratory chain. F-type ATPases consist of two structural domains, F(1) - containing the extramembraneous catalytic core, and F(0) - containing the membrane proton channel, linked together by a central stalk and a peripheral stalk. During catalysis, ATP synthesis in the catalytic domain of F(1) is coupled via a rotary mechanism of the central stalk subunits to proton translocation. Subunits alpha and beta form the catalytic core in F(1). Rotation of the central stalk against the surrounding alpha(3)beta(3) subunits leads to hydrolysis of ATP in three separate catalytic sites on the beta subunits. Subunit alpha does not bear the catalytic high-affinity ATP-binding sites. The chain is ATP synthase subunit alpha, mitochondrial (ATPA) from Brassica napus (Rape).